Here is a 363-residue protein sequence, read N- to C-terminus: Exopolygalacturonase rpg13 (363 aa).

The signal sequence occupies residues 1–26 (MVKFLSLTSSVTALLLLSLGANGVAA). 3 N-linked (GlcNAc...) asparagine glycosylation sites follow: Asn-121, Asn-142, and Asn-150. PbH1 repeat units lie at residues 143–173 (ATDV…DVSR), 174–195 (SSNV…AINE), 197–217 (VTNV…SVGS), 227–248 (VKTV…RIKT), and 256–277 (VSDI…LITT). Residue Asp-188 is the Proton donor of the active site. Cysteines 190 and 207 form a disulfide. Asn-199 carries an N-linked (GlcNAc...) asparagine glycan. His-211 is a catalytic residue. Asn-321 carries N-linked (GlcNAc...) asparagine glycosylation. A disulfide bond links Cys-322 and Cys-328. Residues 328-354 (CTDFTLSGVKITKASNTPKNVCVNLDG) form a PbH1 6 repeat.

This sequence belongs to the glycosyl hydrolase 28 family. N-glycosylated.

It localises to the secreted. The catalysed reaction is [(1-&gt;4)-alpha-D-galacturonosyl](n) + H2O = alpha-D-galacturonate + [(1-&gt;4)-alpha-D-galacturonosyl](n-1). In terms of biological role, specific in hydrolyzing the terminal glycosidic bond of polygalacturonic acid and oligogalacturonates. Has no activity towards trigalacturonic acid. In Rhizopus delemar (strain RA 99-880 / ATCC MYA-4621 / FGSC 9543 / NRRL 43880) (Mucormycosis agent), this protein is Exopolygalacturonase rpg13.